Here is a 322-residue protein sequence, read N- to C-terminus: Probable heme-iron transport system permease protein IsdF (322 aa).

The next 9 helical transmembrane spans lie at 9 to 29 (LLFLCLLVILIATAYISFVTG), 61 to 81 (ILIALMVGAMLAVSGALLQAA), 89 to 109 (ANIIGVSSGALIMRALCMLFI), 114 to 134 (FYLPLLSFIGGLIPFLIIILL), 143 to 163 (VSMILVGVALFVLLNGVLEIL), 179 to 199 (IWSDVYILAVSALLGLILTLL), 233 to 253 (VFLASATVAIVGQLAFLGIIV), 267 to 287 (VLIPFSTVIGAWLLLVADLLG), and 294 to 314 (LEIPANAILMIVGGPMLIYLI).

The protein belongs to the binding-protein-dependent transport system permease family. FecCD subfamily.

The protein localises to the cell membrane. Functionally, part of the binding-protein-dependent transport system for heme-iron. Responsible for the translocation of the substrate across the membrane. This chain is Probable heme-iron transport system permease protein IsdF (isdF), found in Staphylococcus aureus (strain Mu3 / ATCC 700698).